The chain runs to 343 residues: L-threonine 3-dehydrogenase (343 aa).

Position 38 (cysteine 38) interacts with Zn(2+). Residues threonine 40 and histidine 43 each act as charge relay system in the active site. Positions 63, 64, 93, 96, 99, and 107 each coordinate Zn(2+). Residues isoleucine 175, aspartate 195, arginine 200, 262 to 264 (LGI), and 286 to 287 (IY) each bind NAD(+).

It belongs to the zinc-containing alcohol dehydrogenase family. As to quaternary structure, homotetramer. Zn(2+) is required as a cofactor.

Its subcellular location is the cytoplasm. The catalysed reaction is L-threonine + NAD(+) = (2S)-2-amino-3-oxobutanoate + NADH + H(+). Its pathway is amino-acid degradation; L-threonine degradation via oxydo-reductase pathway; glycine from L-threonine: step 1/2. Catalyzes the NAD(+)-dependent oxidation of L-threonine to 2-amino-3-ketobutyrate. The protein is L-threonine 3-dehydrogenase of Paraburkholderia phytofirmans (strain DSM 17436 / LMG 22146 / PsJN) (Burkholderia phytofirmans).